We begin with the raw amino-acid sequence, 725 residues long: Ribosomal RNA large subunit methyltransferase K/L (725 aa).

The 112-residue stretch at 46–157 (VAYRLCLWSR…RGQATLSLDL (112 aa)) folds into the THUMP domain. The segment at 393-412 (TGERGERNDDGQARAPSEPA) is disordered. Over residues 395 to 404 (ERGERNDDGQ) the composition is skewed to basic and acidic residues.

Belongs to the methyltransferase superfamily. RlmKL family.

It is found in the cytoplasm. It carries out the reaction guanosine(2445) in 23S rRNA + S-adenosyl-L-methionine = N(2)-methylguanosine(2445) in 23S rRNA + S-adenosyl-L-homocysteine + H(+). It catalyses the reaction guanosine(2069) in 23S rRNA + S-adenosyl-L-methionine = N(2)-methylguanosine(2069) in 23S rRNA + S-adenosyl-L-homocysteine + H(+). Specifically methylates the guanine in position 2445 (m2G2445) and the guanine in position 2069 (m7G2069) of 23S rRNA. The sequence is that of Ribosomal RNA large subunit methyltransferase K/L from Pseudomonas paraeruginosa (strain DSM 24068 / PA7) (Pseudomonas aeruginosa (strain PA7)).